The sequence spans 346 residues: Phosphoribosylformylglycinamidine cyclo-ligase (346 aa).

The protein belongs to the AIR synthase family.

The protein resides in the cytoplasm. It catalyses the reaction 2-formamido-N(1)-(5-O-phospho-beta-D-ribosyl)acetamidine + ATP = 5-amino-1-(5-phospho-beta-D-ribosyl)imidazole + ADP + phosphate + H(+). Its pathway is purine metabolism; IMP biosynthesis via de novo pathway; 5-amino-1-(5-phospho-D-ribosyl)imidazole from N(2)-formyl-N(1)-(5-phospho-D-ribosyl)glycinamide: step 2/2. The protein is Phosphoribosylformylglycinamidine cyclo-ligase of Bacillus pumilus (strain SAFR-032).